The chain runs to 417 residues: Tyrosine--tRNA ligase (417 aa).

Tyrosine 39 contributes to the L-tyrosine binding site. A 'HIGH' region motif is present at residues 44–53; that stretch reads CTARSLHIGN. Residues tyrosine 176 and glutamine 180 each contribute to the L-tyrosine site. A 'KMSKS' region motif is present at residues 236–240; it reads KMGKT. Position 239 (lysine 239) interacts with ATP. An S4 RNA-binding domain is found at 350–417; sequence FGVLNAFVKA…KKKHILIKPA (68 aa).

It belongs to the class-I aminoacyl-tRNA synthetase family. TyrS type 1 subfamily. As to quaternary structure, homodimer.

It localises to the cytoplasm. The enzyme catalyses tRNA(Tyr) + L-tyrosine + ATP = L-tyrosyl-tRNA(Tyr) + AMP + diphosphate + H(+). Its function is as follows. Catalyzes the attachment of tyrosine to tRNA(Tyr) in a two-step reaction: tyrosine is first activated by ATP to form Tyr-AMP and then transferred to the acceptor end of tRNA(Tyr). This is Tyrosine--tRNA ligase from Bradyrhizobium diazoefficiens (strain JCM 10833 / BCRC 13528 / IAM 13628 / NBRC 14792 / USDA 110).